The following is a 359-amino-acid chain: Biotin synthase (359 aa).

The segment at 1 to 23 (MSVADSSAADSVAAPDTADTSSS) is disordered. The Radical SAM core domain maps to 76–302 (YFGNTVQLYF…VNPDRELRIA (227 aa)). 3 residues coordinate [4Fe-4S] cluster: cysteine 94, cysteine 98, and cysteine 101. [2Fe-2S] cluster is bound by residues cysteine 138, cysteine 170, cysteine 230, and arginine 300.

The protein belongs to the radical SAM superfamily. Biotin synthase family. In terms of assembly, homodimer. The cofactor is [4Fe-4S] cluster. [2Fe-2S] cluster serves as cofactor.

The enzyme catalyses (4R,5S)-dethiobiotin + (sulfur carrier)-SH + 2 reduced [2Fe-2S]-[ferredoxin] + 2 S-adenosyl-L-methionine = (sulfur carrier)-H + biotin + 2 5'-deoxyadenosine + 2 L-methionine + 2 oxidized [2Fe-2S]-[ferredoxin]. It functions in the pathway cofactor biosynthesis; biotin biosynthesis; biotin from 7,8-diaminononanoate: step 2/2. In terms of biological role, catalyzes the conversion of dethiobiotin (DTB) to biotin by the insertion of a sulfur atom into dethiobiotin via a radical-based mechanism. The sequence is that of Biotin synthase from Rhodopirellula baltica (strain DSM 10527 / NCIMB 13988 / SH1).